Consider the following 168-residue polypeptide: Small ribosomal subunit protein bS6 (168 aa).

Residues 103-168 are disordered; it reads RQAIAEEKEK…AAADKSDDNA (66 aa). Residues 106–115 are compositionally biased toward basic and acidic residues; sequence IAEEKEKKAE. Over residues 116–125 the composition is skewed to low complexity; it reads GQAAADAAPA.

The protein belongs to the bacterial ribosomal protein bS6 family.

Binds together with bS18 to 16S ribosomal RNA. The protein is Small ribosomal subunit protein bS6 of Desulfosudis oleivorans (strain DSM 6200 / JCM 39069 / Hxd3) (Desulfococcus oleovorans).